The sequence spans 163 residues: Cytosolic iron-sulfur assembly component 2B (163 aa).

The protein belongs to the MIP18 family. As to quaternary structure, component of the CIA complex. Component of the MMXD complex, which includes CIAO1, ERCC2, CIAO2B, MMS19 and SLC25A5. Interacts with CIAO1, ERCC2 and MMS19; the interactions are direct. Interacts with KIF4A; the interaction facilitates the transfer of Fe-S clusters to KIF4A to ensure proper localization of KIF4A to the mitotic machinery. Interacts with CCDC117; the interaction is direct.

Its subcellular location is the nucleus. The protein resides in the cytoplasm. The protein localises to the cytoskeleton. It is found in the spindle. Functionally, component of the cytosolic iron-sulfur protein assembly (CIA) complex, a multiprotein complex that mediates the incorporation of iron-sulfur cluster into extramitochondrial Fe/S proteins. As a CIA complex component and in collaboration with CIAO1 and MMS19, binds to and facilitates the assembly of most cytosolic-nuclear Fe/S proteins. As part of the mitotic spindle-associated MMXD complex it plays a role in chromosome segregation, probably by facilitating iron-sulfur cluster assembly into ERCC2/XPD. Together with MMS19, facilitates the transfer of Fe-S clusters to the motor protein KIF4A, which ensures proper localization of KIF4A to mitotic machinery components to promote the progression of mitosis. This is Cytosolic iron-sulfur assembly component 2B from Mus musculus (Mouse).